We begin with the raw amino-acid sequence, 273 residues long: MNNRVHQGHLARKRFGQNFLNDQFVIDSIVSAINPQKGQAMVEIGPGLAALTEPVGERLDKLTVIELDRDLAARLQTHPFLGPKLTIYQQDAMTFNFGELAEKMGQPLRVFGNLPYNISTPLMFHLFSYTDAIADMHFMLQKEVVNRLVAGPNSKAYGRLSVMAQYYCNVIPVLEVPPSAFTPPPKVDSAVVRLVPHATMPHPVKDVRVLSRITTEAFNQRRKTIRNSLGNLFSVEVLTGMGIDPAMRAENISVAQYCQMANYLAENALLQES.

Residues Asn-18, Leu-20, Gly-45, Glu-66, Asp-91, and Asn-113 each coordinate S-adenosyl-L-methionine.

The protein belongs to the class I-like SAM-binding methyltransferase superfamily. rRNA adenine N(6)-methyltransferase family. RsmA subfamily.

The protein localises to the cytoplasm. It catalyses the reaction adenosine(1518)/adenosine(1519) in 16S rRNA + 4 S-adenosyl-L-methionine = N(6)-dimethyladenosine(1518)/N(6)-dimethyladenosine(1519) in 16S rRNA + 4 S-adenosyl-L-homocysteine + 4 H(+). Its function is as follows. Specifically dimethylates two adjacent adenosines (A1518 and A1519) in the loop of a conserved hairpin near the 3'-end of 16S rRNA in the 30S particle. May play a critical role in biogenesis of 30S subunits. The chain is Ribosomal RNA small subunit methyltransferase A from Escherichia coli O17:K52:H18 (strain UMN026 / ExPEC).